The primary structure comprises 208 residues: Histone 24 (208 aa).

Ser2 carries the N-acetylserine modification. Lys14 carries the post-translational modification N6-methyllysine. In terms of domain architecture, H15 spans 37 to 113; it reads AHPPYINMIK…GANGRFRVPE (77 aa). The segment at 101–208 is disordered; sequence AGSGANGRFR…KKAAKPAAKA (108 aa). Low complexity predominate over residues 114–138; it reads KAAAAKKPAAAKKPAAAKKPAAAKK. Composition is skewed to basic residues over residues 144–155 and 162–202; these read KAKKPAAAKPKK and KVKK…KKAA.

The protein belongs to the histone H1/H5 family. Interacts with nmad-1. Interacts (when monomethylated at Lys-14) with chromobox protein homolog hpl-1; the interaction is direct. Interacts (when monomethylated at Lys-14) with histone H3 (when trimethylated on 'Lys-27'); the interaction is direct. Post-translationally, methylation at lysine 14 is necessary to regulate male tail development.

The protein localises to the nucleus. The protein resides in the chromosome. It localises to the cytoplasm. Histones H1 are necessary for the condensation of nucleosome chains into higher-order structures. Probably does not act as global transcriptional repressor. Acting in concert with chromobox protein homologs hpl-1 and hpl-2, involved in reproduction, somatic gonad development, male tail development, and vulval cell fate decisions; perhaps as a result of modulating expression of Hox genes mab-5 and egl-5. Plays a role in linking epigenetic regulation with the innate immune response. The polypeptide is Histone 24 (Caenorhabditis elegans).